We begin with the raw amino-acid sequence, 328 residues long: Naphthalene 1,2-dioxygenase system ferredoxin--NAD(P)(+), reductase component (328 aa).

Residues 1-89 form the 2Fe-2S ferredoxin-type domain; that stretch reads MELLIQPNNR…NCAIEVPEAD (89 aa). [2Fe-2S] cluster is bound by residues Cys-35, Cys-40, Cys-43, and Cys-73. The region spanning 96–193 is the FAD-binding FR-type domain; sequence ARIIKGTVVA…SGPLGTAYLR (98 aa).

It belongs to the bacterial ring-hydroxylating dioxygenase ferredoxin reductase component family. In terms of assembly, the naphthalene dioxygenase (NDO) multicomponent enzyme system is composed of an electron transfer component and a dioxygenase component (iron sulfur protein (ISP)). The electron transfer component is composed of a ferredoxin reductase (NdoR) and a ferredoxin (NdoA), and the dioxygenase component is formed of a heterohexamer (trimer of heterodimers) of three large alpha subunits (NdoB) and three small beta subunits (NdoC). The cofactor is [2Fe-2S] cluster. Requires FAD as cofactor.

It carries out the reaction 2 reduced [2Fe-2S]-[ferredoxin] + NAD(+) + H(+) = 2 oxidized [2Fe-2S]-[ferredoxin] + NADH. The enzyme catalyses 2 reduced [2Fe-2S]-[ferredoxin] + NADP(+) + H(+) = 2 oxidized [2Fe-2S]-[ferredoxin] + NADPH. Its pathway is aromatic compound metabolism; naphthalene degradation. Strongly inhibited by p-chloromercuribenzoate. Also inhibited by N-ethylmaleimide and o-phenanthroline. In terms of biological role, component of the naphthalene dioxygenase (NDO) multicomponent enzyme system which catalyzes the incorporation of both atoms of molecular oxygen into naphthalene to form cis-(1R,2S)-dihydroxy-1,2-dihydronaphthalene. Ferredoxin reductase catalyzes the transfer of electrons from NADH to ferredoxin (NdoA). NADPH is also effective but yields only 39% of the activity obtained with NADH. Also able to catalyze the cis-dihydroxylation of biphenyl and phenanthrene. The chain is Naphthalene 1,2-dioxygenase system ferredoxin--NAD(P)(+), reductase component (ndoR) from Pseudomonas putida (Arthrobacter siderocapsulatus).